The sequence spans 312 residues: Ribosomal RNA small subunit methyltransferase H (312 aa).

Residues 35-37 (GGH), Asp55, Asp101, and Gln108 each bind S-adenosyl-L-methionine. The segment at 285–306 (ALKPSEHEVTENSRSRSSVLRV) is disordered. Residues 287–298 (KPSEHEVTENSR) are compositionally biased toward basic and acidic residues.

Belongs to the methyltransferase superfamily. RsmH family.

The protein localises to the cytoplasm. The enzyme catalyses cytidine(1402) in 16S rRNA + S-adenosyl-L-methionine = N(4)-methylcytidine(1402) in 16S rRNA + S-adenosyl-L-homocysteine + H(+). Its function is as follows. Specifically methylates the N4 position of cytidine in position 1402 (C1402) of 16S rRNA. The protein is Ribosomal RNA small subunit methyltransferase H of Aeromonas salmonicida (strain A449).